A 127-amino-acid polypeptide reads, in one-letter code: Fatty acid-binding protein, liver (127 aa).

Met-1 carries the post-translational modification N-acetylmethionine. Ser-11 bears the Phosphoserine mark. 2 positions are modified to N6-succinyllysine: Lys-31 and Lys-36. At Ser-39 the chain carries Phosphoserine. Residue Lys-46 is modified to N6-succinyllysine. Thr-51 is modified (phosphothreonine). 2 positions are modified to N6-succinyllysine: Lys-57 and Lys-78. The residue at position 84 (Lys-84) is an N6-acetyllysine; alternate. At Lys-84 the chain carries N6-succinyllysine; alternate. Lys-90 is subject to N6-succinyllysine. Phosphoserine is present on Ser-100. Lys-121 bears the N6-succinyllysine mark.

It belongs to the calycin superfamily. Fatty-acid binding protein (FABP) family.

The protein localises to the cytoplasm. Its function is as follows. Plays a role in lipoprotein-mediated cholesterol uptake in hepatocytes. Binds cholesterol. Binds free fatty acids and their coenzyme A derivatives, bilirubin, and some other small molecules in the cytoplasm. May be involved in intracellular lipid transport. The sequence is that of Fatty acid-binding protein, liver (Fabp1) from Mus musculus (Mouse).